Consider the following 226-residue polypeptide: uncharacterized protein (226 aa).

The helical transmembrane segment at 121–141 threads the bilayer; sequence YLIGNIIGLPLTIPFILIPLI.

To yeast YDL183c.

It localises to the membrane. This is an uncharacterized protein from Schizosaccharomyces pombe (strain 972 / ATCC 24843) (Fission yeast).